Reading from the N-terminus, the 205-residue chain is Large ribosomal subunit protein uL3 (205 aa).

The protein belongs to the universal ribosomal protein uL3 family. Part of the 50S ribosomal subunit. Forms a cluster with proteins L14 and L19.

Its function is as follows. One of the primary rRNA binding proteins, it binds directly near the 3'-end of the 23S rRNA, where it nucleates assembly of the 50S subunit. This Bacteroides fragilis (strain ATCC 25285 / DSM 2151 / CCUG 4856 / JCM 11019 / LMG 10263 / NCTC 9343 / Onslow / VPI 2553 / EN-2) protein is Large ribosomal subunit protein uL3.